Reading from the N-terminus, the 187-residue chain is Ribosome-recycling factor (187 aa).

The protein belongs to the RRF family.

Its subcellular location is the cytoplasm. Functionally, responsible for the release of ribosomes from messenger RNA at the termination of protein biosynthesis. May increase the efficiency of translation by recycling ribosomes from one round of translation to another. The polypeptide is Ribosome-recycling factor (Orientia tsutsugamushi (strain Ikeda) (Rickettsia tsutsugamushi)).